The following is a 444-amino-acid chain: Dihydroorotate dehydrogenase (quinone), mitochondrial (444 aa).

Residues 34-56 form a helical membrane-spanning segment; that stretch reads GGASRYIIGTASVLVGAMAGFYI. Residues 124-128 and Thr-148 each bind FMN; that span reads AGLDK. Position 128 (Lys-128) interacts with substrate. 173–177 serves as a coordination point for substrate; it reads NRYGF. Positions 220 and 250 each coordinate FMN. Substrate is bound at residue 250-255; it reads NVSSPN. Ser-253 (nucleophile) is an active-site residue. Residues Lys-301 and Ser-329 each coordinate FMN. 330-331 serves as a coordination point for substrate; the sequence is NT. FMN contacts are provided by residues Gly-355, Gly-385, and 406 to 407; that span reads YT.

The protein belongs to the dihydroorotate dehydrogenase family. Type 2 subfamily. FMN is required as a cofactor.

The protein resides in the mitochondrion inner membrane. The catalysed reaction is (S)-dihydroorotate + a quinone = orotate + a quinol. The protein operates within pyrimidine metabolism; UMP biosynthesis via de novo pathway; orotate from (S)-dihydroorotate (quinone route): step 1/1. Catalyzes the conversion of dihydroorotate to orotate with quinone as electron acceptor. The chain is Dihydroorotate dehydrogenase (quinone), mitochondrial (URA9) from Eremothecium gossypii (strain ATCC 10895 / CBS 109.51 / FGSC 9923 / NRRL Y-1056) (Yeast).